The sequence spans 314 residues: tRNA-cytidine(32) 2-sulfurtransferase (314 aa).

The short motif at 49 to 54 (SGGKDS) is the PP-loop motif element. The [4Fe-4S] cluster site is built by Cys-124, Cys-127, and Cys-215.

Belongs to the TtcA family. Homodimer. The cofactor is Mg(2+). [4Fe-4S] cluster is required as a cofactor.

The protein resides in the cytoplasm. The enzyme catalyses cytidine(32) in tRNA + S-sulfanyl-L-cysteinyl-[cysteine desulfurase] + AH2 + ATP = 2-thiocytidine(32) in tRNA + L-cysteinyl-[cysteine desulfurase] + A + AMP + diphosphate + H(+). Its pathway is tRNA modification. In terms of biological role, catalyzes the ATP-dependent 2-thiolation of cytidine in position 32 of tRNA, to form 2-thiocytidine (s(2)C32). The sulfur atoms are provided by the cysteine/cysteine desulfurase (IscS) system. The chain is tRNA-cytidine(32) 2-sulfurtransferase from Histophilus somni (strain 2336) (Haemophilus somnus).